A 158-amino-acid polypeptide reads, in one-letter code: Nuclear cap-binding protein subunit 2 (158 aa).

MRNA is bound by residues tyrosine 17, tyrosine 40, 109–113 (RADWD), 120–124 (RQYGR), and 130–131 (QV). The region spanning 37-115 (CTLYVGNLSY…RVIRADWDAG (79 aa)) is the RRM domain. The disordered stretch occupies residues 123–158 (GRGKHGGQVRDEYRKDYDPERGGYNRAIAQKGGDRQ). Residues 130–145 (QVRDEYRKDYDPERGG) are compositionally biased toward basic and acidic residues.

The protein belongs to the RRM NCBP2 family. Component of the nuclear cap-binding complex (CBC), a heterodimer composed of ncbp-1 and ncbp-2 that interacts with m7GpppG-capped RNA.

Its subcellular location is the nucleus. In terms of biological role, component of the cap-binding complex (CBC), which binds co-transcriptionally to the 5' cap of pre-mRNAs and is involved in various processes such as pre-mRNA splicing and RNA-mediated gene silencing (RNAi). The CBC complex is involved in miRNA-mediated RNA interference and is required for primary microRNAs (miRNAs) processing. In the CBC complex, ncbp-2 recognizes and binds capped RNAs (m7GpppG-capped RNA) but requires ncbp-1 to stabilize the movement of its N-terminal loop and lock the CBC into a high affinity cap-binding state with the cap structure. This Caenorhabditis elegans protein is Nuclear cap-binding protein subunit 2 (ncbp-2).